Here is a 58-residue protein sequence, read N- to C-terminus: Glutathione reductase (58 aa).

Glu5, Thr12, Cys13, and Lys21 together coordinate FAD. Cys13 and Cys18 are joined by a disulfide.

Belongs to the class-I pyridine nucleotide-disulfide oxidoreductase family. As to quaternary structure, homodimer. Requires FAD as cofactor.

The protein resides in the cytoplasm. It catalyses the reaction 2 glutathione + NADP(+) = glutathione disulfide + NADPH + H(+). Catalyzes the reduction of glutathione disulfide (GSSG) to reduced glutathione (GSH). Constitutes the major mechanism to maintain a high GSH:GSSG ratio in the cytosol. The polypeptide is Glutathione reductase (Spirulina sp).